Consider the following 275-residue polypeptide: MAAESAKQTPYVLVADEVEWARLDAMHNGIAKFLGNELTPVDLGQPKKILEIGAGSGAWAIQAAKLYPDADVLAIDMNPIPARPLPPNVRYQNINVLEPFPFEAASFDVIHIRLVLCHLPDGHSVLKRIIDLVAPGGWLLIDDIDWAEAFEGLDKAPGIKRGLTALVRSMEAEAGDPHYGKTLKPYLEASKELSEVHVREVELPVNPIPEDPALAGLSQMMRKALVGALGAAKQSSATVGLTKEVQEGFLSEMAREDMDWSYSCYLYFAAVKKSA.

This sequence belongs to the methyltransferase superfamily. LaeA methyltransferase family.

It participates in mycotoxin biosynthesis. In terms of biological role, methyltransferase; part of the gene cluster that mediates the biosynthesis of strobilurin A, an antifungal polyketide that contains a key beta-methoxyacrylate toxophore that targets the complex III of the mitochondrial electron transport chain. Strobilurin biosynthesis begins with construction of benzoyl CoA by step-wise elimination of ammonia from phenylalanine by the phenylalanine ammonia-lyase str11, oxygenation by str8 and retro-Claisen reaction to form benzoic acid, which is activated to its CoA thiolester benzoyl CoA by the dedicated CoA ligase str10. Benzoyl CoA forms the starter unit for the highly reducing polyketide synthase stpks1 that produces the polyketide prestrobilutin A. The FAD-dependent oxygenase str9 then catalyzes the key oxidative rearrangement responsible for the creation of the beta-methoxyacrylate toxophore. Str9 performs epoxidation of the 2,3 olefin of prestrobilutin A, followed by Meinwald rearrangement to furnish the aldehyde intermediate. Rapid enolization of the aldehyde intermediate would give the beta-methoxyacrylate skeleton and methylations catalyzed by str2 and str3 complete the synthesis and lead to the production of strobilurin A. The short-chain dehydrogenase stl2 and the dehydrogenase str4 play a role in the shunt pathway leading to the production of bolineol. The cluster encodes no obvious halogenase gene that could be involved in production of strobilurin B, nor any obvious dimethylallyl-transferase that could be involved in the production of strobilurin G. It is possible that unknown proteins encoded in, or near, the cluster (such as str1 or stl1) may form new classes of halogenases or dimethylally-transferases, or that the responsible genes are located elsewhere on the genome. Similarly, proteins encoded by str5/str6 hydrolases appear to have no chemical role in the biosynthesis of strobilurin A. Finally, no obvious self-resistance gene is found within the cluster. This Strobilurus tenacellus protein is Methyltransferase str2.